A 79-amino-acid chain; its full sequence is uncharacterized protein (79 aa).

A signal peptide spans 1 to 20 (MSQLMGIITRLQSLQETAEA).

This is an uncharacterized protein from Bacillus subtilis (strain 168).